We begin with the raw amino-acid sequence, 271 residues long: Formamidopyrimidine-DNA glycosylase (271 aa).

P2 serves as the catalytic Schiff-base intermediate with DNA. E3 acts as the Proton donor in catalysis. K56 serves as the catalytic Proton donor; for beta-elimination activity. DNA contacts are provided by H89, R107, and K151. The FPG-type zinc-finger motif lies at 236-270 (NVYGRAGLPCRQCGTPVRLLRQGQRSTYFCPHCQR). The active-site Proton donor; for delta-elimination activity is the R260.

Belongs to the FPG family. In terms of assembly, monomer. Zn(2+) serves as cofactor.

The catalysed reaction is Hydrolysis of DNA containing ring-opened 7-methylguanine residues, releasing 2,6-diamino-4-hydroxy-5-(N-methyl)formamidopyrimidine.. It catalyses the reaction 2'-deoxyribonucleotide-(2'-deoxyribose 5'-phosphate)-2'-deoxyribonucleotide-DNA = a 3'-end 2'-deoxyribonucleotide-(2,3-dehydro-2,3-deoxyribose 5'-phosphate)-DNA + a 5'-end 5'-phospho-2'-deoxyribonucleoside-DNA + H(+). In terms of biological role, involved in base excision repair of DNA damaged by oxidation or by mutagenic agents. Acts as a DNA glycosylase that recognizes and removes damaged bases. Has a preference for oxidized purines, such as 7,8-dihydro-8-oxoguanine (8-oxoG). Has AP (apurinic/apyrimidinic) lyase activity and introduces nicks in the DNA strand. Cleaves the DNA backbone by beta-delta elimination to generate a single-strand break at the site of the removed base with both 3'- and 5'-phosphates. This Acidovorax sp. (strain JS42) protein is Formamidopyrimidine-DNA glycosylase.